The following is a 431-amino-acid chain: Serine/threonine-protein kinase Sgk1 (431 aa).

The tract at residues 1–60 (MTVKAEAARSTLTYSRMRGMVAILIAFMKQRRMGLNDFIQKIASNTYACKHAEVQSILKM) is necessary for localization to the mitochondria. The disordered stretch occupies residues 65-92 (EPELMNANPSPPPSPSQQINLGPSSNPH). S74 is subject to Phosphoserine. S78 is subject to Phosphoserine; by MAPK7. Residues 81–91 (QQINLGPSSNP) show a composition bias toward polar residues. In terms of domain architecture, Protein kinase spans 98 to 355 (FHFLKVIGKG…FMEIKSHIFF (258 aa)). Residues 104 to 112 (IGKGSFGKV) and K127 contribute to the ATP site. The short motif at 131 to 141 (KKAILKKKEEK) is the Nuclear localization signal element. D222 functions as the Proton acceptor in the catalytic mechanism. Position 256 is a phosphothreonine; by PDPK1 (T256). The AGC-kinase C-terminal domain maps to 356 to 431 (SLINWDDLIN…SYAPPVDSFL (76 aa)). Residue T369 is modified to Phosphothreonine; by PKA. 3 positions are modified to phosphoserine: S397, S401, and S422.

Belongs to the protein kinase superfamily. AGC Ser/Thr protein kinase family. In terms of assembly, homodimer; disulfide-linked. Interacts with MAPK3/ERK1, MAPK1/ERK2, MAP2K1/MEK1, MAP2K2/MEK2, NEDD4, NEDD4L, MAPT/TAU, MAPK7, CREB1, SLC9A3R2/NHERF2 and KCNJ1/ROMK1. Forms a trimeric complex with FBXW7 and NOTCH1 Associates with the mammalian target of rapamycin complex 2 (mTORC2) via an interaction with MAPKAP1/SIN1. Post-translationally, regulated by phosphorylation. Activated by phosphorylation on Ser-422 by mTORC2, transforming it into a substrate for PDPK1 which phosphorylates it on Thr-256. Phosphorylation on Ser-397 and Ser-401 are also essential for its activity. Phosphorylation on Ser-78 by MAPK7 is required for growth factor-induced cell cycle progression. In terms of processing, ubiquitinated by NEDD4L; which promotes proteasomal degradation. Ubiquitinated by SYVN1 at the endoplasmic reticulum; which promotes rapid proteasomal degradation and maintains a high turnover rate in resting cells.

It localises to the cytoplasm. The protein resides in the nucleus. Its subcellular location is the endoplasmic reticulum membrane. It is found in the cell membrane. The protein localises to the mitochondrion. It carries out the reaction L-seryl-[protein] + ATP = O-phospho-L-seryl-[protein] + ADP + H(+). It catalyses the reaction L-threonyl-[protein] + ATP = O-phospho-L-threonyl-[protein] + ADP + H(+). Its activity is regulated as follows. Two specific sites, one in the kinase domain (Thr-256) and the other in the C-terminal regulatory region (Ser-422), need to be phosphorylated for its full activation. Phosphorylation at Ser-397 and Ser-401 are also essential for its activity. Activated by WNK1, WNK2, WNK3 and WNK4; which promote phosphorylation by mTORC2. Its function is as follows. Serine/threonine-protein kinase which is involved in the regulation of a wide variety of ion channels, membrane transporters, cellular enzymes, transcription factors, neuronal excitability, cell growth, proliferation, survival, migration and apoptosis. Plays an important role in cellular stress response. Contributes to regulation of renal Na(+) retention, renal K(+) elimination, salt appetite, gastric acid secretion, intestinal Na(+)/H(+) exchange and nutrient transport, insulin-dependent salt sensitivity of blood pressure, salt sensitivity of peripheral glucose uptake, cardiac repolarization and memory consolidation. Up-regulates Na(+) channels: SCNN1A/ENAC, SCN5A and ASIC1/ACCN2, K(+) channels: KCNJ1/ROMK1, KCNA1-5, KCNQ1-5 and KCNE1, epithelial Ca(2+) channels: TRPV5 and TRPV6, chloride channels: BSND, CLCN2 and CFTR, glutamate transporters: SLC1A3/EAAT1, SLC1A2 /EAAT2, SLC1A1/EAAT3, SLC1A6/EAAT4 and SLC1A7/EAAT5, amino acid transporters: SLC1A5/ASCT2, SLC38A1/SN1 and SLC6A19, creatine transporter: SLC6A8, Na(+)/dicarboxylate cotransporter: SLC13A2/NADC1, Na(+)-dependent phosphate cotransporter: SLC34A2/NAPI-2B, glutamate receptor: GRIK2/GLUR6. Up-regulates carriers: SLC9A3/NHE3, SLC12A1/NKCC2, SLC12A3/NCC, SLC5A3/SMIT, SLC2A1/GLUT1, SLC5A1/SGLT1 and SLC15A2/PEPT2. Regulates enzymes: GSK3A/B, PMM2 and Na(+)/K(+) ATPase, and transcription factors: CTNNB1 and nuclear factor NF-kappa-B. Stimulates sodium transport into epithelial cells by enhancing the stability and expression of SCNN1A/ENAC. This is achieved by phosphorylating the NEDD4L ubiquitin E3 ligase, promoting its interaction with 14-3-3 proteins, thereby preventing it from binding to SCNN1A/ENAC and targeting it for degradation. Regulates store-operated Ca(+2) entry (SOCE) by stimulating ORAI1 and STIM1. Regulates KCNJ1/ROMK1 directly via its phosphorylation or indirectly via increased interaction with SLC9A3R2/NHERF2. Phosphorylates MDM2 and activates MDM2-dependent ubiquitination of p53/TP53. Phosphorylates MAPT/TAU and mediates microtubule depolymerization and neurite formation in hippocampal neurons. Phosphorylates SLC2A4/GLUT4 and up-regulates its activity. Phosphorylates APBB1/FE65 and promotes its localization to the nucleus. Phosphorylates MAPK1/ERK2 and activates it by enhancing its interaction with MAP2K1/MEK1 and MAP2K2/MEK2. Phosphorylates FBXW7 and plays an inhibitory role in the NOTCH1 signaling. Phosphorylates FOXO1 resulting in its relocalization from the nucleus to the cytoplasm. Phosphorylates FOXO3, promoting its exit from the nucleus and interference with FOXO3-dependent transcription. Phosphorylates BRAF and MAP3K3/MEKK3 and inhibits their activity. Phosphorylates SLC9A3/NHE3 in response to dexamethasone, resulting in its activation and increased localization at the cell membrane. Phosphorylates CREB1. Necessary for vascular remodeling during angiogenesis. The sequence is that of Serine/threonine-protein kinase Sgk1 (Sgk1) from Mus musculus (Mouse).